We begin with the raw amino-acid sequence, 355 residues long: Syntaxin-5 (355 aa).

Topologically, residues methionine 1 to arginine 333 are cytoplasmic. Residues isoleucine 245–methionine 247 carry the IxM motif; signal for cargo packaging into COPII-coated vesicles motif. The t-SNARE coiled-coil homology domain occupies aspartate 263–tyrosine 325. Positions phenylalanine 287 to alanine 318 form a coiled coil. Residues tryptophan 334–leucine 354 form a helical; Anchor for type IV membrane protein membrane-spanning segment. Residue alanine 355 is a topological domain, vesicular.

It belongs to the syntaxin family. Part of a ternary complex containing STX5A, NSFL1C and VCP. Part of a unique SNARE complex composed of the Golgi SNAREs GOSR1, GOSR2, YKT6 and VTI1A. Component of a SNARE complex consisting of STX5, YKT6, GOSR1 and BET1L. Interacts with BET1L. Interacts with BET1. Interacts with COG4. Interacts with GM130/GOLGA2. Interacts (via IxM motif) with SEC24C and SEC24D; mediates STX5 packaging into COPII-coated vesicles. Interacts with VLDLR; this interaction mediates VLDLR translocation from the endoplasmic reticulum to the plasma membrane.

Its subcellular location is the endoplasmic reticulum-Golgi intermediate compartment membrane. It is found in the golgi apparatus membrane. Its function is as follows. Mediates endoplasmic reticulum to Golgi transport. Together with p115/USO1 and GM130/GOLGA2, involved in vesicle tethering and fusion at the cis-Golgi membrane to maintain the stacked and inter-connected structure of the Golgi apparatus. Functionally, required for Golgi to endoplasmic reticulum retrogade transport, and for intra-Golgi transport. The chain is Syntaxin-5 (Stx5) from Mus musculus (Mouse).